Consider the following 181-residue polypeptide: dTTP/UTP pyrophosphatase (181 aa).

Asp67 (proton acceptor) is an active-site residue.

It belongs to the Maf family. YhdE subfamily. The cofactor is a divalent metal cation.

The protein localises to the cytoplasm. It carries out the reaction dTTP + H2O = dTMP + diphosphate + H(+). It catalyses the reaction UTP + H2O = UMP + diphosphate + H(+). Its function is as follows. Nucleoside triphosphate pyrophosphatase that hydrolyzes dTTP and UTP. May have a dual role in cell division arrest and in preventing the incorporation of modified nucleotides into cellular nucleic acids. This is dTTP/UTP pyrophosphatase from Latilactobacillus sakei subsp. sakei (strain 23K) (Lactobacillus sakei subsp. sakei).